Here is a 261-residue protein sequence, read N- to C-terminus: Ribonuclease HII (261 aa).

The RNase H type-2 domain occupies 71 to 259 (KYIAGVDEVG…VKEAKLHFDS (189 aa)). 3 residues coordinate a divalent metal cation: Asp77, Glu78, and Asp169.

It belongs to the RNase HII family. Mn(2+) is required as a cofactor. The cofactor is Mg(2+).

The protein localises to the cytoplasm. The enzyme catalyses Endonucleolytic cleavage to 5'-phosphomonoester.. In terms of biological role, endonuclease that specifically degrades the RNA of RNA-DNA hybrids. The sequence is that of Ribonuclease HII from Listeria monocytogenes serotype 4b (strain F2365).